Here is a 258-residue protein sequence, read N- to C-terminus: Octanoyltransferase (258 aa).

In terms of domain architecture, BPL/LPL catalytic spans 42–226 (NVGTDTLLLL…AVVAALDGEL (185 aa)). Residues 80 to 87 (RGGKITWH), 156 to 158 (AIG), and 169 to 171 (GFS) each bind substrate. The active-site Acyl-thioester intermediate is the Cys187.

Belongs to the LipB family.

The protein resides in the cytoplasm. The catalysed reaction is octanoyl-[ACP] + L-lysyl-[protein] = N(6)-octanoyl-L-lysyl-[protein] + holo-[ACP] + H(+). It participates in protein modification; protein lipoylation via endogenous pathway; protein N(6)-(lipoyl)lysine from octanoyl-[acyl-carrier-protein]: step 1/2. Its function is as follows. Catalyzes the transfer of endogenously produced octanoic acid from octanoyl-acyl-carrier-protein onto the lipoyl domains of lipoate-dependent enzymes. Lipoyl-ACP can also act as a substrate although octanoyl-ACP is likely to be the physiological substrate. In Rhodococcus jostii (strain RHA1), this protein is Octanoyltransferase.